The chain runs to 215 residues: UPF0319 protein VV2_0960 (215 aa).

A signal peptide spans 1–21 (MNIIKPLTCILAMSISGLATA).

The protein belongs to the UPF0319 family.

In Vibrio vulnificus (strain CMCP6), this protein is UPF0319 protein VV2_0960.